Here is a 123-residue protein sequence, read N- to C-terminus: MPPKVSGKAAKKAGKAQKNISKGDKKKNRKRKESYAIYIYKVLKQVHPDTGISSKAMSIMNSFVNDIFERIASEASRLAHYNKRSTITSREIQTAVRLLLPGELAKHAVSEGTKAVTKYTSSK.

Residues 1-30 are disordered; it reads MPPKVSGKAAKKAGKAQKNISKGDKKKNRK. O-linked (GlcNAc) serine glycosylation is present at Ser110. Lys118 participates in a covalent cross-link: Glycyl lysine isopeptide (Lys-Gly) (interchain with G-Cter in ubiquitin).

Belongs to the histone H2B family. As to quaternary structure, the nucleosome is a histone octamer containing two molecules each of H2A, H2B, H3 and H4 assembled in one H3-H4 heterotetramer and two H2A-H2B heterodimers. The octamer wraps approximately 147 bp of DNA. In terms of processing, monoubiquitination of Lys-118 gives a specific tag for epigenetic transcriptional activation and is also prerequisite for histone H3 'Lys-4' and 'Lys-79' methylation. GlcNAcylation at Ser-110 promotes monoubiquitination of Lys-118. It fluctuates in response to extracellular glucose, and associates with transcribed genes.

It localises to the nucleus. The protein localises to the chromosome. Functionally, core component of nucleosome. Nucleosomes wrap and compact DNA into chromatin, limiting DNA accessibility to the cellular machineries which require DNA as a template. Histones thereby play a central role in transcription regulation, DNA repair, DNA replication and chromosomal stability. DNA accessibility is regulated via a complex set of post-translational modifications of histones, also called histone code, and nucleosome remodeling. This chain is Histone H2B.3, found in Tigriopus californicus (Marine copepod).